The sequence spans 559 residues: Formate--tetrahydrofolate ligase (559 aa).

67-74 (TPAGEGKS) provides a ligand contact to ATP.

Belongs to the formate--tetrahydrofolate ligase family.

The enzyme catalyses (6S)-5,6,7,8-tetrahydrofolate + formate + ATP = (6R)-10-formyltetrahydrofolate + ADP + phosphate. Its pathway is one-carbon metabolism; tetrahydrofolate interconversion. The protein is Formate--tetrahydrofolate ligase of Lactobacillus delbrueckii subsp. bulgaricus (strain ATCC 11842 / DSM 20081 / BCRC 10696 / JCM 1002 / NBRC 13953 / NCIMB 11778 / NCTC 12712 / WDCM 00102 / Lb 14).